Consider the following 380-residue polypeptide: Protein GOLM2 (380 aa).

Methionine 1 is subject to N-acetylmethionine. At 1-14 (MVGFGANRRAGRLP) the chain is on the cytoplasmic side. A helical; Signal-anchor for type II membrane protein membrane pass occupies residues 15-35 (SLVLAVLLVVIAVLAFNYWSI). A coiled-coil region spans residues 35 to 195 (ISSRHVLLQE…QFLQEQKQEA (161 aa)). Residues 36–380 (SSRHVLLQEE…YGKQRFNDAL (345 aa)) lie on the Lumenal side of the membrane. 2 stretches are compositionally biased toward basic and acidic residues: residues 192–212 (KQEAHKFESKGGNELDTDNHA) and 227–247 (KNEEPSSHHIPHGKEQIKRGG). The segment at 192-254 (KQEAHKFESK…RGGDAGMPGI (63 aa)) is disordered. Residues serine 233 and serine 275 each carry the phosphoserine modification. The interval 280–380 (ESHQVISHLP…YGKQRFNDAL (101 aa)) is disordered. Over residues 305–321 (NHNGNSRTSKQNPSNPL) the composition is skewed to polar residues. The segment covering 344–380 (ATKDRAGDFHKLKQNDEERELQMDPADYGKQRFNDAL) has biased composition (basic and acidic residues).

The protein belongs to the GOLM family.

It is found in the membrane. The sequence is that of Protein GOLM2 (GOLM2) from Bos taurus (Bovine).